Here is a 457-residue protein sequence, read N- to C-terminus: ATP synthase subunit beta (457 aa).

Residue Gly-147–Thr-154 participates in ATP binding.

The protein belongs to the ATPase alpha/beta chains family. F-type ATPases have 2 components, CF(1) - the catalytic core - and CF(0) - the membrane proton channel. CF(1) has five subunits: alpha(3), beta(3), gamma(1), delta(1), epsilon(1). CF(0) has three main subunits: a(1), b(2) and c(9-12). The alpha and beta chains form an alternating ring which encloses part of the gamma chain. CF(1) is attached to CF(0) by a central stalk formed by the gamma and epsilon chains, while a peripheral stalk is formed by the delta and b chains.

The protein localises to the cell inner membrane. It catalyses the reaction ATP + H2O + 4 H(+)(in) = ADP + phosphate + 5 H(+)(out). Functionally, produces ATP from ADP in the presence of a proton gradient across the membrane. The catalytic sites are hosted primarily by the beta subunits. This is ATP synthase subunit beta from Haemophilus influenzae (strain PittEE).